The following is a 352-amino-acid chain: PDZ and LIM domain protein 2 (352 aa).

Residues 1–84 (MALTVDVAGP…PLRLQLDRSQ (84 aa)) enclose the PDZ domain. Disordered stretches follow at residues 69 to 95 (IRQS…NGDS) and 108 to 141 (VRTH…PPPF). A compositionally biased stretch (polar residues) spans 81-95 (DRSQAASPGQTNGDS). Over residues 117–135 (SLRSSYSSPTSLSPRAGSP) the composition is skewed to low complexity. S124 carries the phosphoserine modification. T126 carries the phosphothreonine modification. Phosphoserine is present on residues S127, S129, S134, S137, S143, S161, S197, S203, S213, and S266. Disordered regions lie at residues 170–214 (LSYS…GGSL) and 253–275 (ERGG…PASR). The segment covering 258–275 (PAFLPSSLSPQSSLPASR) has biased composition (low complexity). The LIM zinc-binding domain occupies 284–344 (HTCEKCSTSI…EKHARQRYSA (61 aa)).

In terms of assembly, interacts with alpha-actinins ACTN1 and ACTN4, FLNA and MYH9. Interacts (via LIM zinc-binding domain) with MKRN2.

The protein localises to the cytoplasm. It localises to the cytoskeleton. Functionally, probable adapter protein located at the actin cytoskeleton that promotes cell attachment. Necessary for the migratory capacity of epithelial cells. Overexpression enhances cell adhesion to collagen and fibronectin and suppresses anchorage independent growth. May contribute to tumor cell migratory capacity. This Macaca fascicularis (Crab-eating macaque) protein is PDZ and LIM domain protein 2 (PDLIM2).